We begin with the raw amino-acid sequence, 323 residues long: Beta-ketoacyl-[acyl-carrier-protein] synthase III (323 aa).

Active-site residues include C114 and H250. The interval 251–255 is ACP-binding; that stretch reads QANLR. N280 is a catalytic residue.

This sequence belongs to the thiolase-like superfamily. FabH family. Homodimer.

Its subcellular location is the cytoplasm. It catalyses the reaction malonyl-[ACP] + acetyl-CoA + H(+) = 3-oxobutanoyl-[ACP] + CO2 + CoA. It participates in lipid metabolism; fatty acid biosynthesis. In terms of biological role, catalyzes the condensation reaction of fatty acid synthesis by the addition to an acyl acceptor of two carbons from malonyl-ACP. Catalyzes the first condensation reaction which initiates fatty acid synthesis and may therefore play a role in governing the total rate of fatty acid production. Possesses both acetoacetyl-ACP synthase and acetyl transacylase activities. Its substrate specificity determines the biosynthesis of branched-chain and/or straight-chain of fatty acids. The polypeptide is Beta-ketoacyl-[acyl-carrier-protein] synthase III (Cereibacter sphaeroides (strain ATCC 17029 / ATH 2.4.9) (Rhodobacter sphaeroides)).